A 124-amino-acid polypeptide reads, in one-letter code: Fluoride-specific ion channel FluC (124 aa).

4 helical membrane-spanning segments follow: residues 4 to 24, 35 to 55, 62 to 82, and 95 to 115; these read VLFV…ISLL, FGTL…FALG, PEFK…FSTF, and LVKA…VVYL. Gly74 and Thr77 together coordinate Na(+).

The protein belongs to the fluoride channel Fluc/FEX (TC 1.A.43) family.

The protein resides in the cell inner membrane. The catalysed reaction is fluoride(in) = fluoride(out). With respect to regulation, na(+) is not transported, but it plays an essential structural role and its presence is essential for fluoride channel function. Its function is as follows. Fluoride-specific ion channel. Important for reducing fluoride concentration in the cell, thus reducing its toxicity. This chain is Fluoride-specific ion channel FluC, found in Shewanella pealeana (strain ATCC 700345 / ANG-SQ1).